We begin with the raw amino-acid sequence, 472 residues long: Proline--tRNA ligase (472 aa).

This sequence belongs to the class-II aminoacyl-tRNA synthetase family. ProS type 3 subfamily. As to quaternary structure, homodimer.

It localises to the cytoplasm. The catalysed reaction is tRNA(Pro) + L-proline + ATP = L-prolyl-tRNA(Pro) + AMP + diphosphate. Its function is as follows. Catalyzes the attachment of proline to tRNA(Pro) in a two-step reaction: proline is first activated by ATP to form Pro-AMP and then transferred to the acceptor end of tRNA(Pro). The chain is Proline--tRNA ligase from Ureaplasma urealyticum serovar 10 (strain ATCC 33699 / Western).